Consider the following 122-residue polypeptide: Histone H2B 1 (122 aa).

A disordered region spans residues 1–30; sequence MPPKPSAKGAKKAAKTVTKPKDGKKRRHAR. Ser109 is a glycosylation site (O-linked (GlcNAc) serine). Lys117 is covalently cross-linked (Glycyl lysine isopeptide (Lys-Gly) (interchain with G-Cter in ubiquitin)).

This sequence belongs to the histone H2B family. As to quaternary structure, the nucleosome is a histone octamer containing two molecules each of H2A, H2B, H3 and H4 assembled in one H3-H4 heterotetramer and two H2A-H2B heterodimers. The octamer wraps approximately 147 bp of DNA. In terms of processing, monoubiquitination of Lys-117 gives a specific tag for epigenetic transcriptional activation and is also prerequisite for histone H3 'Lys-4' and 'Lys-79' methylation. Post-translationally, glcNAcylation at Ser-109 promotes monoubiquitination of Lys-117. It fluctuates in response to extracellular glucose, and associates with transcribed genes.

The protein resides in the nucleus. Its subcellular location is the chromosome. In terms of biological role, core component of nucleosome. Nucleosomes wrap and compact DNA into chromatin, limiting DNA accessibility to the cellular machineries which require DNA as a template. Histones thereby play a central role in transcription regulation, DNA repair, DNA replication and chromosomal stability. DNA accessibility is regulated via a complex set of post-translational modifications of histones, also called histone code, and nucleosome remodeling. The polypeptide is Histone H2B 1 (his-11) (Caenorhabditis elegans).